Consider the following 155-residue polypeptide: Basic phospholipase A2 PC1 (155 aa).

The first 21 residues, Met-1–Ala-21, serve as a signal peptide directing secretion. Positions Ile-22 to Arg-27 are excised as a propeptide. 7 disulfide bridges follow: Cys-38-Cys-98, Cys-54-Cys-144, Cys-56-Cys-72, Cys-71-Cys-125, Cys-78-Cys-118, Cys-87-Cys-111, and Cys-105-Cys-116. Residues Tyr-55, Gly-57, and Gly-59 each contribute to the Ca(2+) site. The active site involves His-75. A Ca(2+)-binding site is contributed by Asp-76. Asp-119 is a catalytic residue.

The protein belongs to the phospholipase A2 family. Group I subfamily. D49 sub-subfamily. Requires Ca(2+) as cofactor. Expressed by the venom gland.

It is found in the secreted. It carries out the reaction a 1,2-diacyl-sn-glycero-3-phosphocholine + H2O = a 1-acyl-sn-glycero-3-phosphocholine + a fatty acid + H(+). Functionally, snake venom phospholipase A2 (PLA2) that inhibits neuromuscular transmission by blocking acetylcholine release from the nerve termini. PLA2 catalyzes the calcium-dependent hydrolysis of the 2-acyl groups in 3-sn-phosphoglycerides. The protein is Basic phospholipase A2 PC1 of Laticauda colubrina (Yellow-lipped sea krait).